Consider the following 229-residue polypeptide: Large ribosomal subunit protein uL1c (229 aa).

The protein belongs to the universal ribosomal protein uL1 family. As to quaternary structure, part of the 50S ribosomal subunit.

Its subcellular location is the plastid. The protein localises to the chloroplast. In terms of biological role, binds directly to 23S rRNA. Might be involved in E site tRNA release (Potential). The protein is Large ribosomal subunit protein uL1c (rpl1) of Pyropia yezoensis (Susabi-nori).